The primary structure comprises 68 residues: Large ribosomal subunit protein uL29 (68 aa).

It belongs to the universal ribosomal protein uL29 family.

This Leuconostoc citreum (strain KM20) protein is Large ribosomal subunit protein uL29.